The following is a 1178-amino-acid chain: Pyruvate carboxylase 1 (1178 aa).

The 453-residue stretch at Glu18–Gln470 folds into the Biotin carboxylation domain. Positions 136, 220, and 255 each coordinate ATP. An ATP-grasp domain is found at Arg140–Ala337. Arg312 is an active-site residue. In terms of domain architecture, Pyruvate carboxyltransferase spans Thr557–Arg824. Substrate is bound by residues Arg565–Gln569 and Arg638. A divalent metal cation is bound at residue Asp566. A divalent metal cation contacts are provided by Lys734, His764, and His766. Position 734 is an N6-carboxylysine (Lys734). Thr898 serves as a coordination point for substrate. The 76-residue stretch at Lys1094–Glu1169 folds into the Biotinyl-binding domain. Lys1135 carries the post-translational modification N6-biotinyllysine.

In terms of assembly, homotetramer. It depends on biotin as a cofactor. The cofactor is Zn(2+).

The protein localises to the cytoplasm. The catalysed reaction is hydrogencarbonate + pyruvate + ATP = oxaloacetate + ADP + phosphate + H(+). Its pathway is carbohydrate biosynthesis; gluconeogenesis. Its function is as follows. Pyruvate carboxylase catalyzes a 2-step reaction, involving the ATP-dependent carboxylation of the covalently attached biotin in the first step and the transfer of the carboxyl group to pyruvate in the second. This is Pyruvate carboxylase 1 (PYC1) from Saccharomyces cerevisiae (strain ATCC 204508 / S288c) (Baker's yeast).